Reading from the N-terminus, the 425-residue chain is MTEQTKAYFNTPVHERDPLVAQALDNERKRQQDQIELIASENIVSRAVLDALGHEMTNKTLEGYPGNRFHGGGQFVDVVEQAAIDRAKELFGCAYANVQPHSGTQANLAVFFLLLKPGDKVLSLDLAAGGHLSHGMKGNLSGRWFESHNYNVDPETEVIDYDEMERIAEEVRPTLLITGGSAYPRELDFERMGKIAKKVGAWFLVDMAHIAGLVAGGAHPSPFPHADIVTCTTTKTLRGPRGGLILTNNEAWFKKLQSAVFPGVQGSLHSNVLAAKAVCLGEALRPDFKVYAAQVKANARVLAETLIARGVRIVSGGTDTHIVLVDLSSKGLNGKQAEDLLARANITANKNPIPNDSPRPAEWVGMRLGVSAATTRGMKEDEFRTLGTVIADLIEAEAAGNADGVVEGAKAKVATLTAAFPVYAH.

Residues Leu126 and 130-132 (GHL) each bind (6S)-5,6,7,8-tetrahydrofolate. Position 235 is an N6-(pyridoxal phosphate)lysine (Lys235).

Belongs to the SHMT family. Homodimer. Pyridoxal 5'-phosphate is required as a cofactor.

The protein resides in the cytoplasm. It catalyses the reaction (6R)-5,10-methylene-5,6,7,8-tetrahydrofolate + D-alanine + H2O = 2-methylserine + (6S)-5,6,7,8-tetrahydrofolate. The protein operates within one-carbon metabolism; tetrahydrofolate interconversion. Functionally, catalyzes the reversible interconversion of alpha-methyl-L-serine to D-alanine with tetrahydrofolate (THF) serving as the one-carbon carrier. Cannot use alpha-methyl-D-serine, L-serine, D-serine or L-alanine. The polypeptide is 2-methylserine hydroxymethyltransferase (Aminobacter sp).